The primary structure comprises 311 residues: Ornithine carbamoyltransferase (311 aa).

Residues 52-55 (STRT), glutamine 79, arginine 103, and 129-132 (HPVQ) contribute to the carbamoyl phosphate site. Residues asparagine 167, aspartate 226, and 230-231 (SM) contribute to the L-ornithine site. Carbamoyl phosphate is bound by residues 266–267 (CL) and arginine 294.

The protein belongs to the aspartate/ornithine carbamoyltransferase superfamily. OTCase family.

The protein localises to the cytoplasm. It carries out the reaction carbamoyl phosphate + L-ornithine = L-citrulline + phosphate + H(+). The protein operates within amino-acid biosynthesis; L-arginine biosynthesis; L-arginine from L-ornithine and carbamoyl phosphate: step 1/3. In terms of biological role, reversibly catalyzes the transfer of the carbamoyl group from carbamoyl phosphate (CP) to the N(epsilon) atom of ornithine (ORN) to produce L-citrulline. The polypeptide is Ornithine carbamoyltransferase (Sorangium cellulosum (strain So ce56) (Polyangium cellulosum (strain So ce56))).